Here is a 106-residue protein sequence, read N- to C-terminus: Large ribosomal subunit protein uL24 (106 aa).

Belongs to the universal ribosomal protein uL24 family. Part of the 50S ribosomal subunit.

In terms of biological role, one of two assembly initiator proteins, it binds directly to the 5'-end of the 23S rRNA, where it nucleates assembly of the 50S subunit. Its function is as follows. One of the proteins that surrounds the polypeptide exit tunnel on the outside of the subunit. This is Large ribosomal subunit protein uL24 from Acidovorax sp. (strain JS42).